Reading from the N-terminus, the 115-residue chain is Promotilin (115 aa).

The N-terminal stretch at 1 to 25 is a signal peptide; that stretch reads MVSRKAVAALLVVHAPAMLASQTEA. The interval 40-74 is disordered; it reads EKERSKGQKKSLSVWQRSGEEGPVDPAEPIEEEGN.

It belongs to the motilin family.

It localises to the secreted. In terms of biological role, plays an important role in the regulation of interdigestive gastrointestinal motility and indirectly causes rhythmic contraction of duodenal and colonic smooth muscle. This Macaca mulatta (Rhesus macaque) protein is Promotilin (MLN).